A 325-amino-acid polypeptide reads, in one-letter code: GPI-linked NAD(P)(+)--arginine ADP-ribosyltransferase 1 (325 aa).

Residues 1 to 22 form the signal peptide; it reads MKIPAMMSLLLVSVGLRDGVQV. Intrachain disulfides connect Cys53/Cys272 and Cys169/Cys219. Asn65 carries an N-linked (GlcNAc...) asparagine glycan. One can recognise a TR mART core domain in the interval 73–268; that stretch reads KVYADGWAQA…IYLRALGKRS (196 aa). The NAD(+) site is built by Tyr117 and Arg174. Residues Arg174 and Ser197 contribute to the active site. Ser228 provides a ligand contact to NAD(+). Residue Glu235 is part of the active site. Asn248 carries an N-linked (GlcNAc...) asparagine glycan. Residue Ser290 is the site of GPI-anchor amidated serine attachment. The propeptide at 291 to 325 is removed in mature form; it reads APGSISASCSLLLLLLFLVLSALPENPGLQQLTRC.

It belongs to the Arg-specific ADP-ribosyltransferase family. As to expression, abundantly expressed in cardiac and skeletal muscle. Low levels also found in lung.

The protein resides in the sarcoplasmic reticulum membrane. The enzyme catalyses L-arginyl-[protein] + NAD(+) = N(omega)-(ADP-D-ribosyl)-L-arginyl-[protein] + nicotinamide + H(+). Functionally, has ADP-ribosyltransferase activity toward GLP1R. The sequence is that of GPI-linked NAD(P)(+)--arginine ADP-ribosyltransferase 1 (Art1) from Mus musculus (Mouse).